Reading from the N-terminus, the 666-residue chain is Threonine--tRNA ligase (666 aa).

One can recognise a TGS domain in the interval Met-1–Arg-64. The tract at residues Asp-245–Pro-553 is catalytic. 3 residues coordinate Zn(2+): Cys-347, His-398, and His-530.

The protein belongs to the class-II aminoacyl-tRNA synthetase family. As to quaternary structure, homodimer. Zn(2+) is required as a cofactor.

It localises to the cytoplasm. It catalyses the reaction tRNA(Thr) + L-threonine + ATP = L-threonyl-tRNA(Thr) + AMP + diphosphate + H(+). Its function is as follows. Catalyzes the attachment of threonine to tRNA(Thr) in a two-step reaction: L-threonine is first activated by ATP to form Thr-AMP and then transferred to the acceptor end of tRNA(Thr). Also edits incorrectly charged L-seryl-tRNA(Thr). This chain is Threonine--tRNA ligase, found in Allorhizobium ampelinum (strain ATCC BAA-846 / DSM 112012 / S4) (Agrobacterium vitis (strain S4)).